We begin with the raw amino-acid sequence, 163 residues long: Large ribosomal subunit protein uL10 (163 aa).

Belongs to the universal ribosomal protein uL10 family. Part of the ribosomal stalk of the 50S ribosomal subunit. The N-terminus interacts with L11 and the large rRNA to form the base of the stalk. The C-terminus forms an elongated spine to which L12 dimers bind in a sequential fashion forming a multimeric L10(L12)X complex.

Forms part of the ribosomal stalk, playing a central role in the interaction of the ribosome with GTP-bound translation factors. The sequence is that of Large ribosomal subunit protein uL10 from Actinobacillus succinogenes (strain ATCC 55618 / DSM 22257 / CCUG 43843 / 130Z).